The sequence spans 900 residues: Translation initiation factor IF-2 (900 aa).

Composition is skewed to basic and acidic residues over residues 119 to 158 (AAKA…EKQE), 165 to 191 (ADEK…KADA), and 198 to 229 (EEAR…DHHV). A disordered region spans residues 119–306 (AAKAEAEAKA…NARSVAPESM (188 aa)). Positions 257–272 (SANAGNNANSNSNAGS) are enriched in low complexity. One can recognise a tr-type G domain in the interval 400 to 569 (PRAPVVTIMG…LLESEVLELK (170 aa)). Residues 409 to 416 (GHVDHGKT) form a G1 region. Position 409 to 416 (409 to 416 (GHVDHGKT)) interacts with GTP. The segment at 434–438 (GITQH) is G2. A G3 region spans residues 455 to 458 (DTPG). Residues 455–459 (DTPGH) and 509–512 (NKID) each bind GTP. The G4 stretch occupies residues 509–512 (NKID). The tract at residues 545-547 (SAK) is G5.

The protein belongs to the TRAFAC class translation factor GTPase superfamily. Classic translation factor GTPase family. IF-2 subfamily.

The protein localises to the cytoplasm. One of the essential components for the initiation of protein synthesis. Protects formylmethionyl-tRNA from spontaneous hydrolysis and promotes its binding to the 30S ribosomal subunits. Also involved in the hydrolysis of GTP during the formation of the 70S ribosomal complex. The sequence is that of Translation initiation factor IF-2 from Shewanella piezotolerans (strain WP3 / JCM 13877).